The chain runs to 21 residues: Dahlein-5.4 (21 aa).

As to expression, expressed by the skin dorsal glands.

The protein resides in the secreted. Functionally, has no antimicrobial activity. Strongly inhibits the formation of NO by neuronal nitric oxide synthase at micromolar concentrations. In Ranoidea dahlii (Dahl's aquatic frog), this protein is Dahlein-5.4.